The following is a 681-amino-acid chain: GAS2-like protein 1 (681 aa).

A2 carries the post-translational modification N-acetylalanine. In terms of domain architecture, Calponin-homology (CH) spans 27 to 148 (EAMKEDLAEW…CLLEVARRGA (122 aa)). 3 disordered regions span residues 168 to 204 (LRAA…TPSD), 278 to 509 (STAH…PLQL), and 536 to 681 (ASVT…DSWM). Residues 186-199 (ETAPAPGTPARGPR) show a composition bias toward low complexity. The residue at position 193 (T193) is a Phosphothreonine. The GAR domain occupies 203 to 275 (SDLRNLDELV…HYLDKHDPCR (73 aa)). The segment covering 291–303 (FSPQRVSPTTSPR) has biased composition (polar residues). A phosphoserine mark is found at S306 and S316. Over residues 327–342 (STKEGPETPPRPRDQL) the composition is skewed to basic and acidic residues. Position 334 is a phosphothreonine (T334). Phosphoserine is present on residues S352 and S355. Positions 354-365 (DSDSSASSAQSG) are enriched in low complexity. A compositionally biased stretch (basic and acidic residues) spans 370-381 (RSDDTGTGPRRE). Phosphothreonine is present on T391. At S394 the chain carries Phosphoserine. Positions 404–413 (QSRDRLDRGR) are enriched in basic and acidic residues. 4 positions are modified to phosphoserine: S436, S438, S479, and S486. Basic and acidic residues predominate over residues 437–454 (QSREEQAVLLVRRDRDGQ). Residues 475-493 (PRARSPAAPRLSRVSSPSP) show a composition bias toward low complexity. Omega-N-methylarginine is present on R487. 2 positions are modified to phosphoserine: S490 and S492. The residue at position 498 (T498) is a Phosphothreonine. R504 is modified (omega-N-methylarginine). Residues 542–556 (GPVPDPARAPDPPAP) show a composition bias toward pro residues. The segment covering 557 to 571 (DSAYCSSSSSSSSLS) has biased composition (low complexity). R633 bears the Omega-N-methylarginine mark. The segment covering 634 to 644 (GRMDTQPDRKP) has biased composition (basic and acidic residues). A Phosphoserine modification is found at S657.

This sequence belongs to the GAS2 family. In terms of assembly, interacts with MAPRE1.

It is found in the cytoplasm. Its subcellular location is the cytoskeleton. It localises to the stress fiber. Functionally, involved in the cross-linking of microtubules and microfilaments. Regulates microtubule dynamics and stability by interacting with microtubule plus-end tracking proteins, such as MAPRE1, to regulate microtubule growth along actin stress fibers. The protein is GAS2-like protein 1 (GAS2L1) of Homo sapiens (Human).